We begin with the raw amino-acid sequence, 429 residues long: Methanol:N,N-dimethyl-4-nitrosoaniline oxidoreductase (429 aa).

The protein belongs to the iron-containing alcohol dehydrogenase family. As to quaternary structure, homodecamer. It depends on Mg(2+) as a cofactor. Requires Zn(2+) as cofactor. NADPH is required as a cofactor.

It carries out the reaction methanol + A = formaldehyde + AH2. With respect to regulation, inhibited by azide and hydrazine. Catalyzes the oxidation of methanol to yield formaldehyde. While the in vivo electron acceptor is not known, N,N-dimethyl-4-nitrosoaniline (NDMA) can serve this function in vitro and is reduced to 4-(hydroxylamino)-N,N-dimethylaniline. It can also use various other primary alcohols, polyols and formaldehyde. In addition, MNO is able to produce methylformate from methanol plus formaldehyde, and possesses a formaldehyde dismutase and a NADH-dependent formaldehyde reductase activity. The sequence is that of Methanol:N,N-dimethyl-4-nitrosoaniline oxidoreductase (mno) from Amycolatopsis methanolica.